Consider the following 473-residue polypeptide: MSQGTLYDKVWDQHKVTTLPNGQDQLFVGLHLIHEVTSPQAFGMIKERGLEVARPDLTHATVDHIVPTANQDRPYSDDAAETMMAELEENVRDAGIQFSDPTTGDQGIVHVIGPEQGITQPGKTIVCGDSHTSTHGAFGALAFGIGTSQIRDVLATQTIAMEKQKVRKIEVTGELDEGVEAKDIILEIIRRLGTEGGVGYVYEYAGETIENLDMEGRMSICNMSIEGGARAGYVNPDETTYEWLEETDYFQEHPEKFEELKPYWESIRSDEDAEYDDVVEIDAGELDPVVTWGTTPGQGIGIDDPIPEPEDLADDKVDTARRAQKHMRVEPGETMEGYDIDVAFLGSCTNARLPDLRRAARIVKGREVADDVRAFVVPGSQRVQRAAEEEGLKDIFEEAGFEWRNAGCSMCLGMNEDQLEGDEACASSSNRNFVGRQGSKDGRTVLMNPRMVAAAAITGEVSDVRDLKEVTLA.

The [4Fe-4S] cluster site is built by Cys-348, Cys-408, and Cys-411.

This sequence belongs to the aconitase/IPM isomerase family. LeuC type 1 subfamily. As to quaternary structure, heterodimer of LeuC and LeuD. It depends on [4Fe-4S] cluster as a cofactor.

It carries out the reaction (2R,3S)-3-isopropylmalate = (2S)-2-isopropylmalate. It participates in amino-acid biosynthesis; L-leucine biosynthesis; L-leucine from 3-methyl-2-oxobutanoate: step 2/4. In terms of biological role, catalyzes the isomerization between 2-isopropylmalate and 3-isopropylmalate, via the formation of 2-isopropylmaleate. This is 3-isopropylmalate dehydratase large subunit from Haloarcula marismortui (strain ATCC 43049 / DSM 3752 / JCM 8966 / VKM B-1809) (Halobacterium marismortui).